A 231-amino-acid chain; its full sequence is 7-cyano-7-deazaguanine synthase (231 aa).

8–18 (FSGGQDSTTCL) is an ATP binding site. Zn(2+)-binding residues include C188, C197, C200, and C203.

It belongs to the QueC family. Requires Zn(2+) as cofactor.

The catalysed reaction is 7-carboxy-7-deazaguanine + NH4(+) + ATP = 7-cyano-7-deazaguanine + ADP + phosphate + H2O + H(+). It participates in purine metabolism; 7-cyano-7-deazaguanine biosynthesis. Catalyzes the ATP-dependent conversion of 7-carboxy-7-deazaguanine (CDG) to 7-cyano-7-deazaguanine (preQ(0)). The polypeptide is 7-cyano-7-deazaguanine synthase (Salmonella schwarzengrund (strain CVM19633)).